Here is a 470-residue protein sequence, read N- to C-terminus: MAGKTLYDKLWDMHEVKRRDDGSSLIYIDRQILHEVTSPQVRGAAPGRANVARGCQHRHPGPQRADHPGSPVGGRRHRRRNLAHPGADPGRELRRVRHRRVQDERPAPGHRPCGRPGAGRHLPGMTVVCGDSHTSTHWCGALAHGIGTSEVEHVLATQCLVAKKMKNMQVRVEGELPLGVSAKDIVLAVIGRIGTAGGTGHALEFAGSAIRGLSMEGRMTLCNMAIEAGARVGMVAVDEKTIDYVKGRPYAPQGADWDKAVAQWRELVSDADAGFDTVVELKAEEIRPQVTWGTSPEMVLPVDERVPDPASESDPVKRDSIVRALKYMGLAANQPIGEIKVDRVFIGSCTNSRIEDLRAAAEVAKGARSPRASSRRWWCRAPGWSRSRRRRRGWTGSSSRPVSSGATGCSMCLAMNPDRLESGEHCASTSNRNFEGRQGAGGRTHLVSPAMAAAAAVAGRFVDVRQLLQA.

Residues 50 to 121 (NVARGCQHRH…PCGRPGAGRH (72 aa)) form a disordered region. Positions 349, 409, and 412 each coordinate [4Fe-4S] cluster.

Belongs to the aconitase/IPM isomerase family. LeuC type 1 subfamily. Heterodimer of LeuC and LeuD. Requires [4Fe-4S] cluster as cofactor.

The catalysed reaction is (2R,3S)-3-isopropylmalate = (2S)-2-isopropylmalate. Its pathway is amino-acid biosynthesis; L-leucine biosynthesis; L-leucine from 3-methyl-2-oxobutanoate: step 2/4. Functionally, catalyzes the isomerization between 2-isopropylmalate and 3-isopropylmalate, via the formation of 2-isopropylmaleate. This chain is 3-isopropylmalate dehydratase large subunit, found in Azotobacter vinelandii.